The primary structure comprises 85 residues: Cell division protein ZapA (85 aa).

Residues 60 to 85 (AVNVVHDYLKLKEQYEKLEIQLKEKE) adopt a coiled-coil conformation.

Belongs to the ZapA family. Type 2 subfamily. As to quaternary structure, homodimer. Interacts with FtsZ.

The protein resides in the cytoplasm. Functionally, activator of cell division through the inhibition of FtsZ GTPase activity, therefore promoting FtsZ assembly into bundles of protofilaments necessary for the formation of the division Z ring. It is recruited early at mid-cell but it is not essential for cell division. This is Cell division protein ZapA from Bacillus pumilus (strain SAFR-032).